The primary structure comprises 475 residues: Probable L-cysteine desulfhydrase, chloroplastic (475 aa).

A chloroplast-targeting transit peptide spans 1–24; the sequence is MASSLSPPEEASYHHRHTKRYTSS. A disordered region spans residues 1 to 40; sequence MASSLSPPEEASYHHRHTKRYTSSASSASSTTNGTVESSV. The span at 22 to 32 shows a compositional bias: low complexity; sequence TSSASSASSTT. Position 284 is an N6-(pyridoxal phosphate)lysine (Lys-284).

It belongs to the class-V pyridoxal-phosphate-dependent aminotransferase family. As to quaternary structure, interacts in vitro with QS.

It is found in the plastid. The protein resides in the chloroplast. Its function is as follows. May catalyze the production of hydrogen sulfide (H2S) from cysteine. The chain is Probable L-cysteine desulfhydrase, chloroplastic from Arabidopsis thaliana (Mouse-ear cress).